The chain runs to 405 residues: Peroxisomal membrane protein PEX13 (405 aa).

Over residues 1 to 11 the composition is skewed to pro residues; the sequence is MASQPPPPPKP. A disordered region spans residues 1–71; sequence MASQPPPPPK…SQQTGSNNVN (71 aa). The Peroxisomal matrix segment spans residues 1 to 136; it reads MASQPPPPPK…SSRGAFQSIE (136 aa). The span at 61–71 shows a compositional bias: polar residues; the sequence is PSQQTGSNNVN. Residues 137–157 form a helical membrane-spanning segment; it reads SIVHAFASVSMMMDATFSAVY. Residues 147-235 form a targeting to peroxisomes region; sequence MMMDATFSAV…EDQATNSAKS (89 aa). The Cytoplasmic segment spans residues 158 to 176; that stretch reads NSFRAVLDVANHFSRLKIH. A helical membrane pass occupies residues 177–194; sequence FTKVFSAFALVRTIRYLY. The tract at residues 177-198 is interaction with PEX19; sequence FTKVFSAFALVRTIRYLYRRLQ. The Peroxisomal matrix portion of the chain corresponds to 195 to 235; sequence RRLQWMMGLRRGSENEDLWAESEGTVACLSAEDQATNSAKS. Residues 236-256 traverse the membrane as a helical segment; the sequence is WPIFLFFAVILGGPYLIWKLL. Topologically, residues 257 to 405 are cytoplasmic; the sequence is STHNDEVTDN…TGKNGDKQDL (149 aa). Positions 274-338 constitute an SH3 domain; the sequence is DDHVVARAEY…PANYVKILGK (65 aa). S356 carries the post-translational modification Phosphoserine.

The protein belongs to the peroxin-13 family. In terms of assembly, interacts (via SH3 domain) with PEX14 (via SH3-binding motif); forming the PEX13-PEX14 docking complex. Interacts with PEX19.

It localises to the peroxisome membrane. Its function is as follows. Component of the PEX13-PEX14 docking complex, a translocon channel that specifically mediates the import of peroxisomal cargo proteins bound to PEX5 receptor. The PEX13-PEX14 docking complex forms a large import pore which can be opened to a diameter of about 9 nm. Mechanistically, PEX5 receptor along with cargo proteins associates with the PEX14 subunit of the PEX13-PEX14 docking complex in the cytosol, leading to the insertion of the receptor into the organelle membrane with the concomitant translocation of the cargo into the peroxisome matrix. Involved in the import of PTS1- and PTS2-type containing proteins. In Mus musculus (Mouse), this protein is Peroxisomal membrane protein PEX13.